Reading from the N-terminus, the 606-residue chain is Retrovirus-related Pol polyprotein from type-1 retrotransposable element R2 (606 aa).

The region spanning 1-208 (GTLANIIMLE…NTFKYLGLTF (208 aa)) is the Reverse transcriptase domain. The interval 331–606 (IFNIEGPARS…PPDPPRPVPP (276 aa)) is nucleic acid-binding endonuclease.

It carries out the reaction DNA(n) + a 2'-deoxyribonucleoside 5'-triphosphate = DNA(n+1) + diphosphate. The chain is Retrovirus-related Pol polyprotein from type-1 retrotransposable element R2 from Popillia japonica (Japanese beetle).